The sequence spans 281 residues: Lipoyl synthase (281 aa).

Positions 37, 42, 48, 63, 67, 70, and 274 each coordinate [4Fe-4S] cluster. The Radical SAM core domain occupies 49-263 (WSRGTATFMI…RQQAVNKGFK (215 aa)).

The protein belongs to the radical SAM superfamily. Lipoyl synthase family. It depends on [4Fe-4S] cluster as a cofactor.

It localises to the cytoplasm. The enzyme catalyses [[Fe-S] cluster scaffold protein carrying a second [4Fe-4S](2+) cluster] + N(6)-octanoyl-L-lysyl-[protein] + 2 oxidized [2Fe-2S]-[ferredoxin] + 2 S-adenosyl-L-methionine + 4 H(+) = [[Fe-S] cluster scaffold protein] + N(6)-[(R)-dihydrolipoyl]-L-lysyl-[protein] + 4 Fe(3+) + 2 hydrogen sulfide + 2 5'-deoxyadenosine + 2 L-methionine + 2 reduced [2Fe-2S]-[ferredoxin]. It functions in the pathway protein modification; protein lipoylation via endogenous pathway; protein N(6)-(lipoyl)lysine from octanoyl-[acyl-carrier-protein]: step 2/2. In terms of biological role, catalyzes the radical-mediated insertion of two sulfur atoms into the C-6 and C-8 positions of the octanoyl moiety bound to the lipoyl domains of lipoate-dependent enzymes, thereby converting the octanoylated domains into lipoylated derivatives. The protein is Lipoyl synthase of Parabacteroides distasonis (strain ATCC 8503 / DSM 20701 / CIP 104284 / JCM 5825 / NCTC 11152).